A 493-amino-acid chain; its full sequence is UDP-glucose 6-dehydrogenase (493 aa).

NAD(+)-binding positions include glycine 11–glycine 16, aspartate 36, arginine 41, and valine 89–threonine 93. The tract at residues serine 88–glutamate 110 is disordered. Position 107 is an N6-acetyllysine (lysine 107). The tract at residues lysine 129–arginine 135 is allosteric switch region. An NAD(+)-binding site is contributed by serine 130–valine 132. Catalysis depends on glutamate 161, which acts as the Proton donor/acceptor. Residues glutamate 161–glutamate 165, lysine 220–asparagine 224, arginine 260, and lysine 267–glycine 273 contribute to the substrate site. An NAD(+)-binding site is contributed by glutamate 165. Residue lysine 220 is the Proton donor/acceptor of the active site. Cysteine 276 serves as the catalytic Nucleophile. Cysteine 276 to lysine 279 is a binding site for NAD(+). Residues serine 321–threonine 325 are important for formation of active hexamer structure. Phenylalanine 338–lysine 339 contributes to the substrate binding site. Arginine 346 contacts NAD(+). Arginine 442 contributes to the substrate binding site. Residues valine 466 to valine 493 are disordered. Position 474 is a phosphothreonine (threonine 474).

The protein belongs to the UDP-glucose/GDP-mannose dehydrogenase family. As to quaternary structure, homohexamer.

It catalyses the reaction UDP-alpha-D-glucose + 2 NAD(+) + H2O = UDP-alpha-D-glucuronate + 2 NADH + 3 H(+). The protein operates within nucleotide-sugar biosynthesis; UDP-alpha-D-glucuronate biosynthesis; UDP-alpha-D-glucuronate from UDP-alpha-D-glucose: step 1/1. UDP-alpha-D-xylose (UDX) acts as a feedback inhibitor. It binds at the same site as the substrate, but functions as allosteric inhibitor by triggering a conformation change that disrupts the active hexameric ring structure and gives rise to an inactive, horseshoe-shaped hexamer. Catalyzes the formation of UDP-alpha-D-glucuronate, a constituent of complex glycosaminoglycans. Required for the biosynthesis of chondroitin sulfate and heparan sulfate. Required for embryonic development via its role in the biosynthesis of glycosaminoglycans. Required for proper brain and neuronal development. The protein is UDP-glucose 6-dehydrogenase (Ugdh) of Mus musculus (Mouse).